Consider the following 497-residue polypeptide: Guanosine-5'-triphosphate,3'-diphosphate pyrophosphatase (497 aa).

This sequence belongs to the GppA/Ppx family. GppA subfamily.

The enzyme catalyses guanosine 3'-diphosphate 5'-triphosphate + H2O = guanosine 3',5'-bis(diphosphate) + phosphate + H(+). It functions in the pathway purine metabolism; ppGpp biosynthesis; ppGpp from GTP: step 2/2. Catalyzes the conversion of pppGpp to ppGpp. Guanosine pentaphosphate (pppGpp) is a cytoplasmic signaling molecule which together with ppGpp controls the 'stringent response', an adaptive process that allows bacteria to respond to amino acid starvation, resulting in the coordinated regulation of numerous cellular activities. The polypeptide is Guanosine-5'-triphosphate,3'-diphosphate pyrophosphatase (Aliivibrio fischeri (strain MJ11) (Vibrio fischeri)).